The sequence spans 637 residues: Threonine--tRNA ligase (637 aa).

The TGS domain occupies 1–61; that stretch reads MPNVKLPDGN…KEDCSLIIVT (61 aa). Residues 242–533 form a catalytic region; it reads DHRKLGKALD…LIEHYAGKLP (292 aa). C333, H384, and H510 together coordinate Zn(2+).

This sequence belongs to the class-II aminoacyl-tRNA synthetase family. In terms of assembly, homodimer. The cofactor is Zn(2+).

Its subcellular location is the cytoplasm. It catalyses the reaction tRNA(Thr) + L-threonine + ATP = L-threonyl-tRNA(Thr) + AMP + diphosphate + H(+). Catalyzes the attachment of threonine to tRNA(Thr) in a two-step reaction: L-threonine is first activated by ATP to form Thr-AMP and then transferred to the acceptor end of tRNA(Thr). Also edits incorrectly charged L-seryl-tRNA(Thr). In Legionella pneumophila (strain Corby), this protein is Threonine--tRNA ligase.